We begin with the raw amino-acid sequence, 326 residues long: Phospho-N-acetylmuramoyl-pentapeptide-transferase (326 aa).

The next 9 helical transmembrane spans lie at 3–23 (ISISAGIVTFLLTLVGIPAFI), 51–71 (TMGGLIFLIAAVVVSFLVALF), 79–99 (VGMILFILVLYGLVGFLDDFL), 115–135 (LALQLLGGVIFYLFYERGGDM), 138–158 (IFGYQVHLGIFYIVFALFWLV), 169–189 (GIDGLASISVVISLSAYGVIA), 195–215 (MDILLVILAMIGGLLGFFVFN), 221–243 (VFMGDVGSLALGGMLAAISMALH), and 304–324 (VDFFFWGVGLLASLLTLAILY).

It belongs to the glycosyltransferase 4 family. MraY subfamily. Mg(2+) is required as a cofactor.

The protein resides in the cell membrane. It catalyses the reaction UDP-N-acetyl-alpha-D-muramoyl-L-alanyl-gamma-D-glutamyl-L-lysyl-D-alanyl-D-alanine + di-trans,octa-cis-undecaprenyl phosphate = Mur2Ac(oyl-L-Ala-gamma-D-Glu-L-Lys-D-Ala-D-Ala)-di-trans,octa-cis-undecaprenyl diphosphate + UMP. It participates in cell wall biogenesis; peptidoglycan biosynthesis. Functionally, catalyzes the initial step of the lipid cycle reactions in the biosynthesis of the cell wall peptidoglycan: transfers peptidoglycan precursor phospho-MurNAc-pentapeptide from UDP-MurNAc-pentapeptide onto the lipid carrier undecaprenyl phosphate, yielding undecaprenyl-pyrophosphoryl-MurNAc-pentapeptide, known as lipid I. In Streptococcus pneumoniae (strain Hungary19A-6), this protein is Phospho-N-acetylmuramoyl-pentapeptide-transferase.